An 848-amino-acid polypeptide reads, in one-letter code: Oligopeptide transport ATP-binding protein OppF (848 aa).

One can recognise an ABC transporter domain in the interval 13–785 (VKALSMMFKV…PVHPYTRSLI (773 aa)). 47-54 (GESGSGKS) lines the ATP pocket.

The protein belongs to the ABC transporter superfamily. The complex is composed of two ATP-binding proteins (OppD and OppF), two transmembrane proteins (OppB and OppC) and a solute-binding protein (OppA).

Its subcellular location is the cell membrane. It carries out the reaction a [peptide](out) + ATP + H2O = a [peptide](in) + ADP + phosphate + H(+). Its function is as follows. Part of the ABC transporter complex OppABCDF involved in the uptake of oligopeptides. Probably responsible for energy coupling to the transport system. This is Oligopeptide transport ATP-binding protein OppF (oppF) from Mycoplasma genitalium (strain ATCC 33530 / DSM 19775 / NCTC 10195 / G37) (Mycoplasmoides genitalium).